Consider the following 189-residue polypeptide: UPF0301 protein PSPA7_0505 (189 aa).

The protein belongs to the UPF0301 (AlgH) family.

The chain is UPF0301 protein PSPA7_0505 from Pseudomonas paraeruginosa (strain DSM 24068 / PA7) (Pseudomonas aeruginosa (strain PA7)).